Here is a 62-residue protein sequence, read N- to C-terminus: Small ribosomal subunit protein uS14 (62 aa).

4 residues coordinate Zn(2+): cysteine 25, cysteine 28, cysteine 41, and cysteine 44.

Belongs to the universal ribosomal protein uS14 family. Zinc-binding uS14 subfamily. As to quaternary structure, part of the 30S ribosomal subunit. Contacts proteins S3 and S10. The cofactor is Zn(2+).

Its function is as follows. Binds 16S rRNA, required for the assembly of 30S particles and may also be responsible for determining the conformation of the 16S rRNA at the A site. This Persephonella marina (strain DSM 14350 / EX-H1) protein is Small ribosomal subunit protein uS14.